The sequence spans 129 residues: Protein Turandot A1/2 (129 aa).

The signal sequence occupies residues 1 to 21 (MNSSTALMCFALLLISPLCLG). Asparagine 49 carries an N-linked (GlcNAc...) asparagine glycan.

Belongs to the Turandot family.

The protein resides in the secreted. Its function is as follows. A humoral factor that plays a role in stress tolerance; gives increased resistance to the lethal effects of bacterial challenge and stress. Regulated by the JAK/STAT pathway and NF-KB-like Relish pathway in the fat body, upd3 in the hemocytes and Mekk1 in response to septic injury and consequent immune response. In Drosophila sechellia (Fruit fly), this protein is Protein Turandot A1/2 (TotA1).